The sequence spans 424 residues: Kynureninase (424 aa).

Pyridoxal 5'-phosphate contacts are provided by residues leucine 109, threonine 110, 137-140 (FPSD), aspartate 222, histidine 225, and tyrosine 247. Lysine 248 is subject to N6-(pyridoxal phosphate)lysine. Residues tryptophan 278 and asparagine 306 each coordinate pyridoxal 5'-phosphate.

Belongs to the kynureninase family. Homodimer. The cofactor is pyridoxal 5'-phosphate.

It catalyses the reaction L-kynurenine + H2O = anthranilate + L-alanine + H(+). The catalysed reaction is 3-hydroxy-L-kynurenine + H2O = 3-hydroxyanthranilate + L-alanine + H(+). It participates in amino-acid degradation; L-kynurenine degradation; L-alanine and anthranilate from L-kynurenine: step 1/1. It functions in the pathway cofactor biosynthesis; NAD(+) biosynthesis; quinolinate from L-kynurenine: step 2/3. Catalyzes the cleavage of L-kynurenine (L-Kyn) and L-3-hydroxykynurenine (L-3OHKyn) into anthranilic acid (AA) and 3-hydroxyanthranilic acid (3-OHAA), respectively. The polypeptide is Kynureninase (Koribacter versatilis (strain Ellin345)).